Here is a 319-residue protein sequence, read N- to C-terminus: Beta-ketoacyl-[acyl-carrier-protein] synthase III (319 aa).

Catalysis depends on residues cysteine 112 and histidine 246. An ACP-binding region spans residues 247-251 (QANFR). The active site involves asparagine 276.

The protein belongs to the thiolase-like superfamily. FabH family. In terms of assembly, homodimer.

Its subcellular location is the cytoplasm. It carries out the reaction malonyl-[ACP] + acetyl-CoA + H(+) = 3-oxobutanoyl-[ACP] + CO2 + CoA. Its pathway is lipid metabolism; fatty acid biosynthesis. Its function is as follows. Catalyzes the condensation reaction of fatty acid synthesis by the addition to an acyl acceptor of two carbons from malonyl-ACP. Catalyzes the first condensation reaction which initiates fatty acid synthesis and may therefore play a role in governing the total rate of fatty acid production. Possesses both acetoacetyl-ACP synthase and acetyl transacylase activities. Its substrate specificity determines the biosynthesis of branched-chain and/or straight-chain of fatty acids. This chain is Beta-ketoacyl-[acyl-carrier-protein] synthase III, found in Pseudoalteromonas atlantica (strain T6c / ATCC BAA-1087).